The sequence spans 340 residues: ATPase GET3 (340 aa).

35 to 42 (KGGVGKTT) is a binding site for ATP. D64 is a catalytic residue. ATP-binding residues include E245 and N272. The Zn(2+) site is built by C283 and C286.

Belongs to the arsA ATPase family. As to quaternary structure, homodimer.

The protein resides in the cytoplasm. It is found in the endoplasmic reticulum. Functionally, ATPase required for the post-translational delivery of tail-anchored (TA) proteins to the endoplasmic reticulum. Recognizes and selectively binds the transmembrane domain of TA proteins in the cytosol. This complex then targets to the endoplasmic reticulum by membrane-bound receptors, where the tail-anchored protein is released for insertion. This process is regulated by ATP binding and hydrolysis. ATP binding drives the homodimer towards the closed dimer state, facilitating recognition of newly synthesized TA membrane proteins. ATP hydrolysis is required for insertion. Subsequently, the homodimer reverts towards the open dimer state, lowering its affinity for the membrane-bound receptor, and returning it to the cytosol to initiate a new round of targeting. This chain is ATPase GET3, found in Chaetomium globosum (strain ATCC 6205 / CBS 148.51 / DSM 1962 / NBRC 6347 / NRRL 1970) (Soil fungus).